Here is an 838-residue protein sequence, read N- to C-terminus: Protein P (838 aa).

Positions 1–179 (MPLSYQHFRK…FCGSPYSWEQ (179 aa)) are terminal protein domain (TP). The spacer stretch occupies residues 180–341 (ELQHSQRHGD…YCLSHLVNLL (162 aa)). A disordered region spans residues 218 to 242 (LGLQPHQGPLATSQPGRSGSIRPRA). The tract at residues 342-685 (EDWGPCVEHG…YLNLYPVARQ (344 aa)) is polymerase/reverse transcriptase domain (RT). The region spanning 352–595 (EHHIRIPRTP…YSLNFMGYVI (244 aa)) is the Reverse transcriptase domain. Residues Asp424, Asp546, and Asp547 each contribute to the Mg(2+) site.

This sequence belongs to the hepadnaviridae P protein family.

It catalyses the reaction DNA(n) + a 2'-deoxyribonucleoside 5'-triphosphate = DNA(n+1) + diphosphate. The enzyme catalyses Endonucleolytic cleavage to 5'-phosphomonoester.. With respect to regulation, activated by host HSP70 and HSP40 in vitro to be able to bind the epsilon loop of the pgRNA. Because deletion of the RNase H region renders the protein partly chaperone-independent, the chaperones may be needed indirectly to relieve occlusion of the RNA-binding site by this domain. Inhibited by several reverse-transcriptase inhibitors: Lamivudine, Adefovir and Entecavir. In terms of biological role, multifunctional enzyme that converts the viral RNA genome into dsDNA in viral cytoplasmic capsids. This enzyme displays a DNA polymerase activity that can copy either DNA or RNA templates, and a ribonuclease H (RNase H) activity that cleaves the RNA strand of RNA-DNA heteroduplexes in a partially processive 3'- to 5'-endonucleasic mode. Neo-synthesized pregenomic RNA (pgRNA) are encapsidated together with the P protein, and reverse-transcribed inside the nucleocapsid. Initiation of reverse-transcription occurs first by binding the epsilon loop on the pgRNA genome, and is initiated by protein priming, thereby the 5'-end of (-)DNA is covalently linked to P protein. Partial (+)DNA is synthesized from the (-)DNA template and generates the relaxed circular DNA (RC-DNA) genome. After budding and infection, the RC-DNA migrates in the nucleus, and is converted into a plasmid-like covalently closed circular DNA (cccDNA). The activity of P protein does not seem to be necessary for cccDNA generation, and is presumably released from (+)DNA by host nuclear DNA repair machinery. In Homo sapiens (Human), this protein is Protein P.